The following is a 398-amino-acid chain: Succinate--CoA ligase [ADP-forming] subunit beta (398 aa).

The 246-residue stretch at 9 to 254 folds into the ATP-grasp domain; the sequence is KRLLHEYGAP…LSEEDPKEIE (246 aa). ATP contacts are provided by residues Lys46, 53–55, Glu109, Ala112, and Glu117; that span reads GRG. Positions 209 and 223 each coordinate Mg(2+). Substrate-binding positions include Asn274 and 331 to 333; that span reads GIM.

This sequence belongs to the succinate/malate CoA ligase beta subunit family. In terms of assembly, heterotetramer of two alpha and two beta subunits. Mg(2+) is required as a cofactor.

The catalysed reaction is succinate + ATP + CoA = succinyl-CoA + ADP + phosphate. It carries out the reaction GTP + succinate + CoA = succinyl-CoA + GDP + phosphate. It functions in the pathway carbohydrate metabolism; tricarboxylic acid cycle; succinate from succinyl-CoA (ligase route): step 1/1. In terms of biological role, succinyl-CoA synthetase functions in the citric acid cycle (TCA), coupling the hydrolysis of succinyl-CoA to the synthesis of either ATP or GTP and thus represents the only step of substrate-level phosphorylation in the TCA. The beta subunit provides nucleotide specificity of the enzyme and binds the substrate succinate, while the binding sites for coenzyme A and phosphate are found in the alpha subunit. In Bartonella tribocorum (strain CIP 105476 / IBS 506), this protein is Succinate--CoA ligase [ADP-forming] subunit beta.